Here is a 138-residue protein sequence, read N- to C-terminus: Salivary protein 15 Iper-3 (138 aa).

Residues 1-21 (MESFVAMKVVCITVLFVIVAV) form the signal peptide. N-linked (GlcNAc...) asparagine glycans are attached at residues N30, N42, N68, N107, and N127. Positions 119–138 (GPNGQKCANKSQCVGHIPGC) are CD4-binding.

This sequence belongs to the salp15 family. In terms of assembly, interacts with host CD4. Interacts with host DC-SIGN (CD209). Interacts with Borrelia outer surface protein C (OspC). In terms of tissue distribution, expressed in salivary glands.

It is found in the secreted. Salivary tick protein that downregulates host immune system by binding to both dendritic cells, and CD4(+) T cells. Specifically binds to the CD4 coreceptor on T cells. This interaction prevents the activation of the Src kinase, Lck, and its downstream substrate Zap-70, and results in deficient activation of PLCgamma1, the repression of calcium fluxes triggered by T-cell antigen receptor (TCR) ligation, and a subsequent reduction in interleukin-2 production. This salivary protein also binds to DC-SIGN (CD209) on dendritic cells (DC) and activates the Raf-1 kinase/MEK signaling pathway that results in down-regulating expression of pro-inflammatory cytokines. Furthermore, it inhibits T cell proliferation induced by DCs. It also inhibits in vitro keratinocyte inflammation induced by Borrelia burgdorferi or by the major outer surface protein (OspC) of Borrelia. In addition, it downregulates chemokines and monocyte chemoattractant protein 1, as well as several antimicrobial peptides such as defensins, cathelicidin, psoriasin, and RNase 7. Apart from its immunomodulatory activities, it is also associated with protection of Borrelia spirochetes from antibody-mediated killing through its binding to OspC. In vivo, tests on different immune disease animal models show promising therapeutic results, e.g., in inhibiting HIV infection, experimental autoimmune encephalomyelitis, transplantation rejection, and asthma. This Ixodes persulcatus (Taiga tick) protein is Salivary protein 15 Iper-3.